A 494-amino-acid chain; its full sequence is DnaJ homolog subfamily C member 7 (494 aa).

Ala-2 carries the post-translational modification N-acetylalanine. TPR repeat units lie at residues 28 to 61 (AETF…CPKN), 62 to 95 (ASYY…DDSF), 96 to 129 (VRGH…DHKN), 142 to 175 (VMEY…APAC), 177 to 209 (RFKI…DSTN), 210 to 243 (ADAL…APDH), 256 to 289 (LKAK…DPNN), 294 to 327 (AKLY…DDTY), and 328 to 361 (IKAY…EKTK). In terms of domain architecture, J spans 381–451 (DYYKILGVDK…KKKTRYDSGQ (71 aa)). Ser-393 carries the post-translational modification Phosphoserine.

Associates with complexes containing chaperones HSP70 and HSP90. Interacts with the GAP domain of NF1. Interacts with HSP90AA1. Interacts with HSPA1A/B; the interaction is enhanced by ATP. Interacts with HSP90AB1. Interacts with PGR. Interacts with RAD9A; the interaction is interrupted by UV and heat shock treatments. Interacts with HUS1 and RAD1. Interacts with NR1I3. The DNAJC7-NR1I3 complex may also include HSP90. Interacts with HSPA8.

Its subcellular location is the cytoplasm. It localises to the nucleus. It is found in the cytoskeleton. Functionally, acts as a co-chaperone regulating the molecular chaperones HSP70 and HSP90 in folding of steroid receptors, such as the glucocorticoid receptor and the progesterone receptor. Proposed to act as a recycling chaperone by facilitating the return of chaperone substrates to early stages of chaperoning if further folding is required. In vitro, induces ATP-independent dissociation of HSP90 but not of HSP70 from the chaperone-substrate complexes. Recruits NR1I3 to the cytoplasm. The chain is DnaJ homolog subfamily C member 7 (DNAJC7) from Homo sapiens (Human).